The primary structure comprises 379 residues: Lipid-A-disaccharide synthase (379 aa).

This sequence belongs to the LpxB family.

It carries out the reaction a lipid X + a UDP-2-N,3-O-bis[(3R)-3-hydroxyacyl]-alpha-D-glucosamine = a lipid A disaccharide + UDP + H(+). The protein operates within bacterial outer membrane biogenesis; LPS lipid A biosynthesis. In terms of biological role, condensation of UDP-2,3-diacylglucosamine and 2,3-diacylglucosamine-1-phosphate to form lipid A disaccharide, a precursor of lipid A, a phosphorylated glycolipid that anchors the lipopolysaccharide to the outer membrane of the cell. The protein is Lipid-A-disaccharide synthase of Aeromonas hydrophila subsp. hydrophila (strain ATCC 7966 / DSM 30187 / BCRC 13018 / CCUG 14551 / JCM 1027 / KCTC 2358 / NCIMB 9240 / NCTC 8049).